The sequence spans 859 residues: Replication origin-binding protein (859 aa).

Residues 70-235 (PLAADARRVT…AALRGAGSVH (166 aa)) form the Helicase ATP-binding domain. 83–90 (APMGSGKT) serves as a coordination point for ATP.

It belongs to the herpesviridae OriBP family. Homodimer. Interacts with the major DNA-binding protein. Interacts with the helicase/primase component UL8 and the polymerase accessory protein.

It is found in the host nucleus. In terms of biological role, functions as a docking protein to recruit essential components of the viral replication machinery to viral DNA origins. In the presence of the major DNA-binding protein, opens dsDNA leading to a conformational change in the origin that facilitates DNA unwinding and subsequent replication. The polypeptide is Replication origin-binding protein (UL9) (Bovine herpesvirus 1.1 (strain Cooper) (BoHV-1)).